We begin with the raw amino-acid sequence, 213 residues long: ATP phosphoribosyltransferase (213 aa).

Belongs to the ATP phosphoribosyltransferase family. Short subfamily. As to quaternary structure, heteromultimer composed of HisG and HisZ subunits.

It is found in the cytoplasm. It catalyses the reaction 1-(5-phospho-beta-D-ribosyl)-ATP + diphosphate = 5-phospho-alpha-D-ribose 1-diphosphate + ATP. It functions in the pathway amino-acid biosynthesis; L-histidine biosynthesis; L-histidine from 5-phospho-alpha-D-ribose 1-diphosphate: step 1/9. Functionally, catalyzes the condensation of ATP and 5-phosphoribose 1-diphosphate to form N'-(5'-phosphoribosyl)-ATP (PR-ATP). Has a crucial role in the pathway because the rate of histidine biosynthesis seems to be controlled primarily by regulation of HisG enzymatic activity. The polypeptide is ATP phosphoribosyltransferase (Variovorax paradoxus (strain S110)).